A 292-amino-acid chain; its full sequence is Imipenem-hydrolyzing beta-lactamase (292 aa).

The N-terminal stretch at 1–27 (MSLNVKQSRIAILFSSCLISISFFSQA) is a signal peptide. An intrachain disulfide couples C70 to C240. S71 serves as the catalytic Acyl-ester intermediate. 236-238 (KTG) provides a ligand contact to substrate.

The protein belongs to the class-A beta-lactamase family.

It catalyses the reaction a beta-lactam + H2O = a substituted beta-amino acid. Hydrolyzes carbapenems such as imipenem, which are extended-spectrum beta-lactam antibiotics. This is Imipenem-hydrolyzing beta-lactamase (nmcA) from Enterobacter cloacae.